Here is a 1077-residue protein sequence, read N- to C-terminus: Hemoglobin and hemoglobin-haptoglobin-binding protein A (1077 aa).

The signal sequence occupies residues 1 to 24 (MTNFRLNVLAYSVMLGLTASVAYA). A disordered region spans residues 25–72 (EPTNQPTNQPTNQPTNQPTNQPTNQPTNQPTNQPTNQPTNQPTNQNSN). 11 tandem repeats follow at residues 26 to 29 (PTNQ), 30 to 33 (PTNQ), 34 to 37 (PTNQ), 38 to 41 (PTNQ), 42 to 45 (PTNQ), 46 to 49 (PTNQ), 50 to 53 (PTNQ), 54 to 57 (PTNQ), 58 to 61 (PTNQ), 62 to 65 (PTNQ), and 66 to 69 (PTNQ). The tract at residues 26 to 69 (PTNQPTNQPTNQPTNQPTNQPTNQPTNQPTNQPTNQPTNQPTNQ) is 11 X 4 AA tandem repeats of P-T-N-Q. The span at 26 to 70 (PTNQPTNQPTNQPTNQPTNQPTNQPTNQPTNQPTNQPTNQPTNQN) shows a compositional bias: low complexity. The TonB box motif lies at 78–85 (EQINVSGS). A TBDR plug domain is found at 89–216 (TDTKAPPKIA…LGGSVSLDTK (128 aa)). A TBDR beta-barrel domain is found at 224 to 1077 (NKNYYASYKR…NYRMSVQFEF (854 aa)). The TonB C-terminal box signature appears at 1060 to 1077 (NRFYAPERNYRMSVQFEF).

It belongs to the TonB-dependent receptor family. Hemoglobin/haptoglobin binding protein subfamily.

The protein localises to the cell outer membrane. Acts as a receptor for hemoglobin or the hemoglobin/haptoglobin complex of the human host and is required for heme uptake. This is Hemoglobin and hemoglobin-haptoglobin-binding protein A (hgpA) from Haemophilus influenzae.